The following is a 222-amino-acid chain: Protein SHI RELATED SEQUENCE 4 (222 aa).

Positions 72, 75, 83, 88, 92, and 99 each coordinate Zn(2+). A DNA-binding region (zn(2)-C6 fungal-type; degenerate) is located at residues 72 to 99 (CQECGNQAKKGCTHGRCRTCCKSNGLHC). Residues 114 to 137 (RERQQQLQTPTSNPTGGSGRVGKY) are disordered. Over residues 118-128 (QQLQTPTSNPT) the composition is skewed to polar residues. Positions 191–194 (IAGH) match the Required for homo- and heterodimerization motif.

It belongs to the SHI protein family. In terms of tissue distribution, expressed in cotyledon tips, leaf primordia, hydathodes, stipules, and lateral root primordia and weakly at the edges of petals and sepals.

The protein localises to the nucleus. Functionally, transcription activator that binds DNA on 5'-ACTCTAC-3' and promotes auxin homeostasis-regulating gene expression (e.g. YUC genes), as well as genes affecting stamen development, cell expansion and timing of flowering. Synergistically with other SHI-related proteins, regulates gynoecium, stamen and leaf development in a dose-dependent manner, controlling apical-basal patterning. Promotes style and stigma formation, and influences vascular development during gynoecium development. May also have a role in the formation and/or maintenance of the shoot apical meristem (SAM). In Arabidopsis thaliana (Mouse-ear cress), this protein is Protein SHI RELATED SEQUENCE 4 (SRS4).